The following is a 110-amino-acid chain: UPF0473 protein SSP1146 (110 aa).

It belongs to the UPF0473 family.

The chain is UPF0473 protein SSP1146 from Staphylococcus saprophyticus subsp. saprophyticus (strain ATCC 15305 / DSM 20229 / NCIMB 8711 / NCTC 7292 / S-41).